A 665-amino-acid polypeptide reads, in one-letter code: RNA-directed RNA polymerase (665 aa).

The RdRp catalytic domain occupies 310–485 (NKEEKVKEWS…LKEGKVNPSP (176 aa)). Residues Asp-454, Tyr-491, and Gly-495 each coordinate Mg(2+).

In terms of assembly, part of the packaging complex composed of RDRP, P4 and P7. Interacts with P7. It depends on Mg(2+) as a cofactor. Mn(2+) is required as a cofactor.

The protein localises to the virion. It catalyses the reaction RNA(n) + a ribonucleoside 5'-triphosphate = RNA(n+1) + diphosphate. In terms of biological role, rna-dependent RNA polymerase part of the packaging complex that packages the viral RNA segments, replicate them into a double-stranded form and transcribe them. This Pseudomonas phage phi6 (Bacteriophage phi-6) protein is RNA-directed RNA polymerase (P2).